We begin with the raw amino-acid sequence, 101 residues long: NAD(P)H-quinone oxidoreductase subunit 4L, chloroplastic (101 aa).

The next 3 membrane-spanning stretches (helical) occupy residues 2–22 (MLEH…YGLI), 32–52 (MCLE…SDLF), and 61–81 (IFSI…LAII).

This sequence belongs to the complex I subunit 4L family. As to quaternary structure, NDH is composed of at least 16 different subunits, 5 of which are encoded in the nucleus.

Its subcellular location is the plastid. The protein localises to the chloroplast thylakoid membrane. The enzyme catalyses a plastoquinone + NADH + (n+1) H(+)(in) = a plastoquinol + NAD(+) + n H(+)(out). The catalysed reaction is a plastoquinone + NADPH + (n+1) H(+)(in) = a plastoquinol + NADP(+) + n H(+)(out). NDH shuttles electrons from NAD(P)H:plastoquinone, via FMN and iron-sulfur (Fe-S) centers, to quinones in the photosynthetic chain and possibly in a chloroplast respiratory chain. The immediate electron acceptor for the enzyme in this species is believed to be plastoquinone. Couples the redox reaction to proton translocation, and thus conserves the redox energy in a proton gradient. The polypeptide is NAD(P)H-quinone oxidoreductase subunit 4L, chloroplastic (Ranunculus macranthus (Large buttercup)).